Consider the following 282-residue polypeptide: Protoheme IX farnesyltransferase (282 aa).

Helical transmembrane passes span 13–33 (VAGM…GAAG), 36–56 (MVTS…FNQI), 74–96 (ASGR…PALI), 101–120 (AGGV…YNGV), 129–149 (AFSL…GWLA), 156–176 (SPEI…HFWL), 207–227 (LWYA…FIAE), 232–252 (IAVC…LASP), and 261–281 (VSML…SGII).

The protein belongs to the UbiA prenyltransferase family. Protoheme IX farnesyltransferase subfamily.

It is found in the cell inner membrane. The enzyme catalyses heme b + (2E,6E)-farnesyl diphosphate + H2O = Fe(II)-heme o + diphosphate. It participates in porphyrin-containing compound metabolism; heme O biosynthesis; heme O from protoheme: step 1/1. Functionally, converts heme B (protoheme IX) to heme O by substitution of the vinyl group on carbon 2 of heme B porphyrin ring with a hydroxyethyl farnesyl side group. The protein is Protoheme IX farnesyltransferase of Oleidesulfovibrio alaskensis (strain ATCC BAA-1058 / DSM 17464 / G20) (Desulfovibrio alaskensis).